A 215-amino-acid polypeptide reads, in one-letter code: Cytochrome b6 (215 aa).

A helical transmembrane segment spans residues 32–52 (IFYCIGGIVFTSFLIQVASGF). A heme c-binding site is contributed by C35. 2 residues coordinate heme b: H86 and H100. Helical transmembrane passes span 90–110 (ASMM…TGGF), 116–136 (LTWV…VTGY), and 186–206 (LHTF…FLMI). Residues H187 and H202 each contribute to the heme b site.

Belongs to the cytochrome b family. PetB subfamily. In terms of assembly, the 4 large subunits of the cytochrome b6-f complex are cytochrome b6, subunit IV (17 kDa polypeptide, PetD), cytochrome f and the Rieske protein, while the 4 small subunits are PetG, PetL, PetM and PetN. The complex functions as a dimer. It depends on heme b as a cofactor. Heme c is required as a cofactor.

The protein resides in the plastid. The protein localises to the chloroplast thylakoid membrane. Its function is as follows. Component of the cytochrome b6-f complex, which mediates electron transfer between photosystem II (PSII) and photosystem I (PSI), cyclic electron flow around PSI, and state transitions. The chain is Cytochrome b6 from Gracilaria tenuistipitata var. liui (Red alga).